Consider the following 586-residue polypeptide: YTH domain-containing family protein 2 (586 aa).

Disordered stretches follow at residues 98–128 (LKEKVKQSRALRQSVNNAAEQQPSTKPQPVQ), 141–181 (SQDQ…KESP), and 301–464 (QGLA…PLVS). Polar residues-rich tracts occupy residues 107-128 (ALRQSVNNAAEQQPSTKPQPVQ), 169-181 (TLPTTPRTIKESP), and 352-368 (SSQAALSCKSKQSTDIQ). Positions 398 to 418 (CARRHRSSSPRGRSGSHKSRR) are enriched in basic residues. The span at 421–436 (TDSPVSRSTTKSTPSR) shows a compositional bias: polar residues. A YTH domain is found at 435 to 576 (SRARQPGHRD…YCGRDLLRLM (142 aa)). The segment covering 441-458 (GHRDYREYRDDRNRDTKP) has biased composition (basic and acidic residues).

It belongs to the YTHDF family. YTHDF1 subfamily.

Functionally, specifically recognizes and binds N6-methyladenosine (m6A)-containing mRNAs, and regulates their stability. M6A is a modification present at internal sites of mRNAs and some non-coding RNAs and plays a role in mRNA stability and processing. Plays a role in pathogenicity towards plant host. The polypeptide is YTH domain-containing family protein 2 (Pyricularia oryzae (strain 70-15 / ATCC MYA-4617 / FGSC 8958) (Rice blast fungus)).